Reading from the N-terminus, the 336-residue chain is Coproporphyrin III ferrochelatase (336 aa).

Positions 52 and 116 each coordinate Fe-coproporphyrin III. Positions 176 and 259 each coordinate Fe(2+).

The protein belongs to the ferrochelatase family.

The protein resides in the cytoplasm. The catalysed reaction is Fe-coproporphyrin III + 2 H(+) = coproporphyrin III + Fe(2+). It functions in the pathway porphyrin-containing compound metabolism; protoheme biosynthesis. Functionally, involved in coproporphyrin-dependent heme b biosynthesis. Catalyzes the insertion of ferrous iron into coproporphyrin III to form Fe-coproporphyrin III. This Mycobacterium leprae (strain Br4923) protein is Coproporphyrin III ferrochelatase.